The following is a 203-amino-acid chain: Urease accessory protein UreG (203 aa).

14–21 (GPVGSGKT) contacts GTP.

This sequence belongs to the SIMIBI class G3E GTPase family. UreG subfamily. In terms of assembly, homodimer. UreD, UreF and UreG form a complex that acts as a GTP-hydrolysis-dependent molecular chaperone, activating the urease apoprotein by helping to assemble the nickel containing metallocenter of UreC. The UreE protein probably delivers the nickel.

It is found in the cytoplasm. Functionally, facilitates the functional incorporation of the urease nickel metallocenter. This process requires GTP hydrolysis, probably effectuated by UreG. The sequence is that of Urease accessory protein UreG from Agrobacterium fabrum (strain C58 / ATCC 33970) (Agrobacterium tumefaciens (strain C58)).